Here is a 311-residue protein sequence, read N- to C-terminus: Phosphoribosylaminoimidazole-succinocarboxamide synthase (311 aa).

Belongs to the SAICAR synthetase family.

It carries out the reaction 5-amino-1-(5-phospho-D-ribosyl)imidazole-4-carboxylate + L-aspartate + ATP = (2S)-2-[5-amino-1-(5-phospho-beta-D-ribosyl)imidazole-4-carboxamido]succinate + ADP + phosphate + 2 H(+). It participates in purine metabolism; IMP biosynthesis via de novo pathway; 5-amino-1-(5-phospho-D-ribosyl)imidazole-4-carboxamide from 5-amino-1-(5-phospho-D-ribosyl)imidazole-4-carboxylate: step 1/2. In Aromatoleum aromaticum (strain DSM 19018 / LMG 30748 / EbN1) (Azoarcus sp. (strain EbN1)), this protein is Phosphoribosylaminoimidazole-succinocarboxamide synthase.